A 337-amino-acid polypeptide reads, in one-letter code: Anthranilate phosphoribosyltransferase (337 aa).

5-phospho-alpha-D-ribose 1-diphosphate is bound by residues Gly-82, 85–86 (GD), Thr-90, 92–95 (NIST), 110–118 (KHGGRSVSS), and Ser-122. Residue Gly-82 participates in anthranilate binding. Position 94 (Ser-94) interacts with Mg(2+). Arg-168 contacts anthranilate. Mg(2+) contacts are provided by Asp-226 and Glu-227.

Belongs to the anthranilate phosphoribosyltransferase family. In terms of assembly, homodimer. Requires Mg(2+) as cofactor.

It catalyses the reaction N-(5-phospho-beta-D-ribosyl)anthranilate + diphosphate = 5-phospho-alpha-D-ribose 1-diphosphate + anthranilate. Its pathway is amino-acid biosynthesis; L-tryptophan biosynthesis; L-tryptophan from chorismate: step 2/5. Its function is as follows. Catalyzes the transfer of the phosphoribosyl group of 5-phosphorylribose-1-pyrophosphate (PRPP) to anthranilate to yield N-(5'-phosphoribosyl)-anthranilate (PRA). This Francisella tularensis subsp. holarctica (strain OSU18) protein is Anthranilate phosphoribosyltransferase.